Reading from the N-terminus, the 141-residue chain is Putative pre-16S rRNA nuclease (141 aa).

Belongs to the YqgF nuclease family.

The protein resides in the cytoplasm. Its function is as follows. Could be a nuclease involved in processing of the 5'-end of pre-16S rRNA. The protein is Putative pre-16S rRNA nuclease of Cupriavidus taiwanensis (strain DSM 17343 / BCRC 17206 / CCUG 44338 / CIP 107171 / LMG 19424 / R1) (Ralstonia taiwanensis (strain LMG 19424)).